The sequence spans 238 residues: DNA repair protein RecO (238 aa).

The protein belongs to the RecO family.

Functionally, involved in DNA repair and RecF pathway recombination. This Cereibacter sphaeroides (strain ATCC 17023 / DSM 158 / JCM 6121 / CCUG 31486 / LMG 2827 / NBRC 12203 / NCIMB 8253 / ATH 2.4.1.) (Rhodobacter sphaeroides) protein is DNA repair protein RecO.